We begin with the raw amino-acid sequence, 188 residues long: Adenine phosphoribosyltransferase (188 aa).

It belongs to the purine/pyrimidine phosphoribosyltransferase family. In terms of assembly, homodimer.

The protein localises to the cytoplasm. The enzyme catalyses AMP + diphosphate = 5-phospho-alpha-D-ribose 1-diphosphate + adenine. Its pathway is purine metabolism; AMP biosynthesis via salvage pathway; AMP from adenine: step 1/1. Catalyzes a salvage reaction resulting in the formation of AMP, that is energically less costly than de novo synthesis. The chain is Adenine phosphoribosyltransferase from Burkholderia multivorans (strain ATCC 17616 / 249).